Consider the following 445-residue polypeptide: Phosphoglucosamine mutase (445 aa).

Ser-102 functions as the Phosphoserine intermediate in the catalytic mechanism. Mg(2+) contacts are provided by Ser-102, Asp-241, Asp-243, and Asp-245. The residue at position 102 (Ser-102) is a Phosphoserine.

The protein belongs to the phosphohexose mutase family. Mg(2+) is required as a cofactor. Activated by phosphorylation.

The enzyme catalyses alpha-D-glucosamine 1-phosphate = D-glucosamine 6-phosphate. Catalyzes the conversion of glucosamine-6-phosphate to glucosamine-1-phosphate. The protein is Phosphoglucosamine mutase of Photorhabdus laumondii subsp. laumondii (strain DSM 15139 / CIP 105565 / TT01) (Photorhabdus luminescens subsp. laumondii).